The following is a 371-amino-acid chain: Bifunctional enzyme IspD/IspF (371 aa).

Positions 1–210 (MSEISLIMLA…LDLPTPSFEI (210 aa)) are 2-C-methyl-D-erythritol 4-phosphate cytidylyltransferase. Residues 211 to 371 (FTGNGFDVHE…NLKYFDWTRL (161 aa)) are 2-C-methyl-D-erythritol 2,4-cyclodiphosphate synthase. A divalent metal cation-binding residues include D217 and H219. 4-CDP-2-C-methyl-D-erythritol 2-phosphate-binding positions include 217-219 (DVH) and 243-244 (HS). H251 is an a divalent metal cation binding site. Residues 265–267 (DIG), 270–274 (YPDTD), 341–344 (TTTE), F348, and R351 contribute to the 4-CDP-2-C-methyl-D-erythritol 2-phosphate site.

It in the N-terminal section; belongs to the IspD/TarI cytidylyltransferase family. IspD subfamily. The protein in the C-terminal section; belongs to the IspF family. The cofactor is a divalent metal cation.

The catalysed reaction is 2-C-methyl-D-erythritol 4-phosphate + CTP + H(+) = 4-CDP-2-C-methyl-D-erythritol + diphosphate. The enzyme catalyses 4-CDP-2-C-methyl-D-erythritol 2-phosphate = 2-C-methyl-D-erythritol 2,4-cyclic diphosphate + CMP. It functions in the pathway isoprenoid biosynthesis; isopentenyl diphosphate biosynthesis via DXP pathway; isopentenyl diphosphate from 1-deoxy-D-xylulose 5-phosphate: step 2/6. The protein operates within isoprenoid biosynthesis; isopentenyl diphosphate biosynthesis via DXP pathway; isopentenyl diphosphate from 1-deoxy-D-xylulose 5-phosphate: step 4/6. Its function is as follows. Bifunctional enzyme that catalyzes the formation of 4-diphosphocytidyl-2-C-methyl-D-erythritol from CTP and 2-C-methyl-D-erythritol 4-phosphate (MEP) (IspD), and catalyzes the conversion of 4-diphosphocytidyl-2-C-methyl-D-erythritol 2-phosphate (CDP-ME2P) to 2-C-methyl-D-erythritol 2,4-cyclodiphosphate (ME-CPP) with a corresponding release of cytidine 5-monophosphate (CMP) (IspF). The polypeptide is Bifunctional enzyme IspD/IspF (Campylobacter jejuni subsp. jejuni serotype O:6 (strain 81116 / NCTC 11828)).